Consider the following 161-residue polypeptide: Large ribosomal subunit protein uL23m (161 aa).

The transit peptide at 1 to 34 directs the protein to the mitochondrion; the sequence is MSKIAGKRLVYFPNITFTLCRGLNLQPKFAVFRV.

This sequence belongs to the universal ribosomal protein uL23 family. As to quaternary structure, component of the mitochondrial large ribosomal subunit (mt-LSU). Mature yeast 74S mitochondrial ribosomes consist of a small (37S) and a large (54S) subunit. The 37S small subunit contains a 15S ribosomal RNA (15S mt-rRNA) and at least 32 different proteins. The 54S large subunit contains a 21S rRNA (21S mt-rRNA) and at least 45 different proteins. uL23m forms the wall of the exit tunnel. Interacts with the C-terminus of OXA1.

Its subcellular location is the mitochondrion. Functionally, component of the mitochondrial ribosome (mitoribosome), a dedicated translation machinery responsible for the synthesis of mitochondrial genome-encoded proteins, including at least some of the essential transmembrane subunits of the mitochondrial respiratory chain. The mitoribosomes are attached to the mitochondrial inner membrane and translation products are cotranslationally integrated into the membrane. This Schizosaccharomyces pombe (strain 972 / ATCC 24843) (Fission yeast) protein is Large ribosomal subunit protein uL23m (mrp20).